Consider the following 350-residue polypeptide: Salicylate decarboxylase (350 aa).

Belongs to the metallo-dependent hydrolases superfamily. As to quaternary structure, homotetramer.

The catalysed reaction is salicylate + H(+) = phenol + CO2. Its activity is regulated as follows. Inhibited by AgNO(3), HgCl(2), p-chloromercuribenzoic acid and NiCl(2). Its function is as follows. Reversibly catalyzes the regioselective carboxylation of phenol to form salicylic acid. Involved in a pathway for the degradation of salicylate via phenol. Also catalyzes the decarboxylation of beta-resorcylic acid (2,4-dihydroxybenzoic acid) into resorcinol (1,3-dihydroxybenzene), gamma-resorcylic acid (2,6-dihydroxybenzoic acid) into resorcinol, 2,3-dihydroxybenzoic acid into catechol (1,2-dihydroxybenzene), and 4-aminosalicylic acid into 3-aminophenol. The sequence is that of Salicylate decarboxylase from Cutaneotrichosporon moniliiforme (Yeast).